The following is a 795-amino-acid chain: Inactive N-acetylated-alpha-linked acidic dipeptidase-like protein 2 (795 aa).

The disordered stretch occupies residues 1 to 38; it reads MGENEASLPNTSLQGKKMAYQKVHADQRAPGHSQYLDN. At 1–121 the chain is on the cytoplasmic side; sequence MGENEASLPN…RSAPKSNRCN (121 aa). The residue at position 92 (Ser92) is a Phosphoserine. A helical; Signal-anchor for type II membrane protein transmembrane segment spans residues 122–142; that stretch reads FCHVLKILCTATILFIFGILI. Over 143–795 the chain is Extracellular; the sequence is GYYVHTNCPS…VFKSVLDGKN (653 aa). N-linked (GlcNAc...) asparagine glycosylation is found at Asn295, Asn373, Asn534, and Asn759.

It belongs to the peptidase M28 family. M28B subfamily. In terms of tissue distribution, expressed at higher level in kidney and placenta. In embryo, it is mainly confined to duodenal and stomach endoderm, mesonephros, metanephros and pancreas.

The protein localises to the membrane. In terms of biological role, may be catalytically inactive. The chain is Inactive N-acetylated-alpha-linked acidic dipeptidase-like protein 2 (NAALADL2) from Homo sapiens (Human).